We begin with the raw amino-acid sequence, 135 residues long: Small ribosomal subunit protein uS9 (135 aa).

Residues 96–135 (SADNRKPLKTEGHLSRDPRAKERRKYGLKKARKAPQFSKR) are disordered. The span at 97–115 (ADNRKPLKTEGHLSRDPRA) shows a compositional bias: basic and acidic residues. Over residues 116 to 135 (KERRKYGLKKARKAPQFSKR) the composition is skewed to basic residues.

It belongs to the universal ribosomal protein uS9 family.

This is Small ribosomal subunit protein uS9 from Prochlorococcus marinus (strain MIT 9313).